The primary structure comprises 1804 residues: Collagen alpha-1(XI) chain (1804 aa).

A signal peptide spans Met1 to Gly34. A propeptide spans Ala35–Glu511 (N-terminal propeptide). Cystine bridges form between Cys60–Cys242 and Cys181–Cys235. In terms of domain architecture, Laminin G-like spans Asp70–Cys242. The interval Lys229 to His417 is nonhelical region. Over residues Tyr315–Pro329 the composition is skewed to polar residues. 2 disordered regions span residues Tyr315–Glu334 and Glu433–Thr506. Residues Gly418–Thr506 are triple-helical region (interrupted). The Collagen-like 1 domain occupies Gly440 to Gly488. 2 stretches are compositionally biased toward low complexity: residues Pro447–Asp465 and Leu477–Pro494. Positions Ile507 to Ala509 are short nonhelical segment. A telopeptide region spans residues Gln510–Gly527. A disordered region spans residues Arg526–Ile1567. Collagen-like domains follow at residues Gly527 to Gly584 and Pro567 to Gly623. The triple-helical region stretch occupies residues Pro528–Val1540. 2 stretches are compositionally biased toward gly residues: residues Gly539–Gly548 and Gly581–Gly590. Position 610 is an allysine (Lys610). Positions Pro639 to Arg655 are enriched in low complexity. Over residues Gln697 to Pro708 the composition is skewed to pro residues. The segment covering Gln715–Ala726 has biased composition (low complexity). Positions Gly728–Asp781 constitute a Collagen-like 4 domain. Positions Arg805 to Lys814 are enriched in basic and acidic residues. 3 stretches are compositionally biased toward low complexity: residues Lys873–Lys901, Arg916–Val925, and Pro969–Ile979. The span at Gly1040 to Gly1049 shows a compositional bias: gly residues. Positions Arg1074–Pro1083 are enriched in pro residues. Low complexity predominate over residues Ala1084 to Val1108. Over residues Gly1160–Gly1169 the composition is skewed to gly residues. Positions Met1216–Pro1227 are enriched in pro residues. Low complexity-rich tracts occupy residues Pro1240–Val1249 and Ala1282–Pro1296. Positions Gln1341 to Arg1360 are enriched in pro residues. Low complexity-rich tracts occupy residues Ala1383 to Pro1392 and Gln1417 to Asp1426. Collagen-like domains are found at residues Gly1427–Ala1482 and Gly1481–Glu1539. The span at Pro1428–Leu1437 shows a compositional bias: pro residues. At Lys1450 the chain carries Allysine. The segment covering Pro1453 to Pro1462 has biased composition (low complexity). A compositionally biased stretch (gly residues) spans Gly1481 to Gly1490. The segment covering Pro1491–Ala1507 has biased composition (pro residues). A compositionally biased stretch (low complexity) spans Pro1509–Thr1519. Residues Pro1528 to Pro1537 show a composition bias toward pro residues. The interval Ile1541 to Gly1561 is nonhelical region (C-terminal). Residues Asp1562–Gly1804 constitute a propeptide, C-terminal propeptide. The region spanning Glu1575–Leu1803 is the Fibrillar collagen NC1 domain. An intrachain disulfide couples Cys1605 to Cys1637. Ca(2+) contacts are provided by Asp1623, Asn1625, Gln1626, Cys1628, and Asp1631. Asn1638 carries an N-linked (GlcNAc...) asparagine glycan. Cystine bridges form between Cys1646-Cys1801 and Cys1712-Cys1755.

This sequence belongs to the fibrillar collagen family. As to quaternary structure, trimers composed of three different chains: alpha 1(XI), alpha 2(XI), and alpha 3(XI). Alpha 3(XI) is a post-translational modification of alpha 1(II). Alpha 1(V) can also be found instead of alpha 3(XI)=1(II). Post-translationally, prolines at the third position of the tripeptide repeating unit (G-X-Y) are hydroxylated in some or all of the chains. In terms of processing, N-glycosylated.

It localises to the secreted. It is found in the extracellular space. Its subcellular location is the extracellular matrix. Its function is as follows. May play an important role in fibrillogenesis by controlling lateral growth of collagen II fibrils. This Mus musculus (Mouse) protein is Collagen alpha-1(XI) chain (Col11a1).